The chain runs to 405 residues: MTKNSSTVFTHARIATLEEKAANLGLIEEAALVVKDARIVYAGPENKLPGEYASFEKIDCGNRLITPGLIDCHTHLVHAGNRAHEFELRLQGATYEEVARAGGGIVSSVRNLRAASEDDLVRETLPRLDALIAEGVTTVEVKSGYGLDRDSEIKSLKAARRLGEERDVAIRTTFLGAHALPPEMNGDKAAYIDRVINDMLPAIAEQGLADAVDGFCEGIAFLPDEIARVFDAAKAHDIPVKLHADQLSNLHGAALAASYGALSADHLEYTDADGAAAMASAGTVAVLLPGAYYFIRETQKPPVEAFRAAGTKMALATDNNPGTSPLTSLLLTMNMGATLFRMTVEECIAGVTREAARALGILDQTGTLEIGKDADLAIWDIERPAELVYRIGFNPLWKRVFKGQI.

Positions 73 and 75 each coordinate Fe(3+). Zn(2+)-binding residues include H73 and H75. 4-imidazolone-5-propanoate is bound by residues R82, Y145, and H178. Position 145 (Y145) interacts with N-formimidoyl-L-glutamate. H243 is a Fe(3+) binding site. Zn(2+) is bound at residue H243. Q246 lines the 4-imidazolone-5-propanoate pocket. D318 serves as a coordination point for Fe(3+). D318 serves as a coordination point for Zn(2+). N-formimidoyl-L-glutamate-binding residues include N320 and G322. T323 is a binding site for 4-imidazolone-5-propanoate.

Belongs to the metallo-dependent hydrolases superfamily. HutI family. It depends on Zn(2+) as a cofactor. Fe(3+) is required as a cofactor.

Its subcellular location is the cytoplasm. It catalyses the reaction 4-imidazolone-5-propanoate + H2O = N-formimidoyl-L-glutamate. It functions in the pathway amino-acid degradation; L-histidine degradation into L-glutamate; N-formimidoyl-L-glutamate from L-histidine: step 3/3. Catalyzes the hydrolytic cleavage of the carbon-nitrogen bond in imidazolone-5-propanoate to yield N-formimidoyl-L-glutamate. It is the third step in the universal histidine degradation pathway. In Brucella suis (strain ATCC 23445 / NCTC 10510), this protein is Imidazolonepropionase.